A 360-amino-acid polypeptide reads, in one-letter code: Lipid-A-disaccharide synthase (360 aa).

The protein belongs to the LpxB family.

It carries out the reaction a lipid X + a UDP-2-N,3-O-bis[(3R)-3-hydroxyacyl]-alpha-D-glucosamine = a lipid A disaccharide + UDP + H(+). It functions in the pathway bacterial outer membrane biogenesis; LPS lipid A biosynthesis. Condensation of UDP-2,3-diacylglucosamine and 2,3-diacylglucosamine-1-phosphate to form lipid A disaccharide, a precursor of lipid A, a phosphorylated glycolipid that anchors the lipopolysaccharide to the outer membrane of the cell. This Helicobacter acinonychis (strain Sheeba) protein is Lipid-A-disaccharide synthase.